The following is a 360-amino-acid chain: Peptide chain release factor 1 (360 aa).

The residue at position 235 (Gln-235) is an N5-methylglutamine. A disordered region spans residues 284–313; it reads AKRQQAEASTRRNLLGSGDRSDRNRTYNFP.

This sequence belongs to the prokaryotic/mitochondrial release factor family. In terms of processing, methylated by PrmC. Methylation increases the termination efficiency of RF1.

Its subcellular location is the cytoplasm. Functionally, peptide chain release factor 1 directs the termination of translation in response to the peptide chain termination codons UAG and UAA. This Salmonella gallinarum (strain 287/91 / NCTC 13346) protein is Peptide chain release factor 1.